A 377-amino-acid chain; its full sequence is Anhydro-N-acetylmuramic acid kinase (377 aa).

Position 18–25 (Gly-18–Asp-25) interacts with ATP.

The protein belongs to the anhydro-N-acetylmuramic acid kinase family.

The enzyme catalyses 1,6-anhydro-N-acetyl-beta-muramate + ATP + H2O = N-acetyl-D-muramate 6-phosphate + ADP + H(+). It participates in amino-sugar metabolism; 1,6-anhydro-N-acetylmuramate degradation. The protein operates within cell wall biogenesis; peptidoglycan recycling. In terms of biological role, catalyzes the specific phosphorylation of 1,6-anhydro-N-acetylmuramic acid (anhMurNAc) with the simultaneous cleavage of the 1,6-anhydro ring, generating MurNAc-6-P. Is required for the utilization of anhMurNAc either imported from the medium or derived from its own cell wall murein, and thus plays a role in cell wall recycling. This Xanthomonas campestris pv. campestris (strain 8004) protein is Anhydro-N-acetylmuramic acid kinase.